The chain runs to 150 residues: Putative STAG3-like protein 4 (150 aa).

This sequence belongs to the SCC3 family.

The protein is Putative STAG3-like protein 4 (STAG3L4) of Homo sapiens (Human).